A 271-amino-acid polypeptide reads, in one-letter code: Shikimate dehydrogenase (NADP(+)) (271 aa).

Residues 14-16 (SLS) and threonine 61 each bind shikimate. Lysine 65 serves as the catalytic Proton acceptor. Asparagine 86 and aspartate 101 together coordinate shikimate. NADP(+) contacts are provided by residues 125 to 129 (GAGGA) and isoleucine 212. Shikimate is bound at residue tyrosine 214. Glycine 235 is a binding site for NADP(+).

It belongs to the shikimate dehydrogenase family. As to quaternary structure, homodimer.

The catalysed reaction is shikimate + NADP(+) = 3-dehydroshikimate + NADPH + H(+). It participates in metabolic intermediate biosynthesis; chorismate biosynthesis; chorismate from D-erythrose 4-phosphate and phosphoenolpyruvate: step 4/7. Its function is as follows. Involved in the biosynthesis of the chorismate, which leads to the biosynthesis of aromatic amino acids. Catalyzes the reversible NADPH linked reduction of 3-dehydroshikimate (DHSA) to yield shikimate (SA). The chain is Shikimate dehydrogenase (NADP(+)) from Clostridium perfringens (strain 13 / Type A).